We begin with the raw amino-acid sequence, 151 residues long: Large ribosomal subunit protein bL9 (151 aa).

The protein belongs to the bacterial ribosomal protein bL9 family.

In terms of biological role, binds to the 23S rRNA. The chain is Large ribosomal subunit protein bL9 from Oenococcus oeni (strain ATCC BAA-331 / PSU-1).